Consider the following 268-residue polypeptide: Nickel import ATP-binding protein NikE (268 aa).

The ABC transporter domain occupies 4-252; the sequence is LNVCGLSHHY…SSDAGRVLQN (249 aa). 45–52 contacts ATP; that stretch reads GRSGCGKS.

It belongs to the ABC transporter superfamily. Nickel importer (TC 3.A.1.5.3) family. The complex is composed of two ATP-binding proteins (NikD and NikE), two transmembrane proteins (NikB and NikC) and a solute-binding protein (NikA).

Its subcellular location is the cell inner membrane. The enzyme catalyses Ni(2+)(out) + ATP + H2O = Ni(2+)(in) + ADP + phosphate + H(+). Its function is as follows. Part of the ABC transporter complex NikABCDE involved in nickel import. Responsible for energy coupling to the transport system. In Shigella flexneri serotype 5b (strain 8401), this protein is Nickel import ATP-binding protein NikE.